The sequence spans 406 residues: 1-deoxy-D-xylulose 5-phosphate reductoisomerase (406 aa).

NADPH is bound by residues threonine 21, glycine 22, serine 23, isoleucine 24, glycine 47, glutamine 50, and asparagine 127. Lysine 128 lines the 1-deoxy-D-xylulose 5-phosphate pocket. Residue glutamate 129 participates in NADPH binding. Position 151 (aspartate 151) interacts with Mn(2+). The 1-deoxy-D-xylulose 5-phosphate site is built by serine 152, glutamate 153, serine 177, and histidine 200. Glutamate 153 is a binding site for Mn(2+). NADPH is bound at residue glycine 206. Serine 213, asparagine 218, lysine 219, and glutamate 222 together coordinate 1-deoxy-D-xylulose 5-phosphate. Glutamate 222 serves as a coordination point for Mn(2+).

The protein belongs to the DXR family. It depends on Mg(2+) as a cofactor. Requires Mn(2+) as cofactor.

The enzyme catalyses 2-C-methyl-D-erythritol 4-phosphate + NADP(+) = 1-deoxy-D-xylulose 5-phosphate + NADPH + H(+). Its pathway is isoprenoid biosynthesis; isopentenyl diphosphate biosynthesis via DXP pathway; isopentenyl diphosphate from 1-deoxy-D-xylulose 5-phosphate: step 1/6. In terms of biological role, catalyzes the NADPH-dependent rearrangement and reduction of 1-deoxy-D-xylulose-5-phosphate (DXP) to 2-C-methyl-D-erythritol 4-phosphate (MEP). This is 1-deoxy-D-xylulose 5-phosphate reductoisomerase from Mycobacterium leprae (strain Br4923).